We begin with the raw amino-acid sequence, 1220 residues long: Protein patched homolog 1 (1220 aa).

Positions 1–27 (MASDPRDPGPAGGVFGDLPPSYTRSPP) are disordered. At 1-84 (MASDPRDPGP…GCHIQRHCGK (84 aa)) the chain is on the cytoplasmic side. The helical transmembrane segment at 85–105 (VLFIGLLVFGALSVGLRVAAI) threads the bilayer. Topologically, residues 106-419 (ETDIEKLWVE…LNDIMKSFSD (314 aa)) are extracellular. A glycan (N-linked (GlcNAc...) asparagine) is linked at Asn397. Residues 420 to 440 (VSVIRVAGGYLLMLAYACVTM) traverse the membrane as a helical segment. One can recognise an SSD domain in the interval 421-579 (SVIRVAGGYL…LLIFPAILSL (159 aa)). Over 441-449 (LRWDCAKSQ) the chain is Cytoplasmic. A helical transmembrane segment spans residues 450–470 (GAVGLAGVLLVALSVAAGLGL). Residues 471-484 (CSLLGLSFNAATTQ) lie on the Extracellular side of the membrane. Residues 485–505 (VLPSLALGIGVDDMFLLGHSF) traverse the membrane as a helical segment. Over 506 to 528 (TETRSNIPFKERTGDCLRRTGTS) the chain is Cytoplasmic. Residues 529–549 (VALTSVNNMIAFFMAALVPIP) traverse the membrane as a helical segment. The Extracellular segment spans residues 550 to 558 (ALRAFSLQA). The chain crosses the membrane as a helical span at residues 559–579 (AVVVVFNFAMALLIFPAILSL). The Cytoplasmic segment spans residues 580-739 (DLHRREDKRL…APLLLKPETK (160 aa)). Residues 740–760 (TVVVVVFVALLSLSLYGTTMV) form a helical membrane-spanning segment. Residues 761–1016 (HDGLYLTDIV…WEQYIGLRHW (256 aa)) lie on the Extracellular side of the membrane. Asn865 and Asn888 each carry an N-linked (GlcNAc...) asparagine glycan. Residues 1017–1037 (FLLSISVVLACTFLVCAILLL) traverse the membrane as a helical segment. The Cytoplasmic portion of the chain corresponds to 1038–1044 (NPWTAGV). A helical transmembrane segment spans residues 1045–1065 (IVFILPMMTVELFGIMGLIGI). The Extracellular portion of the chain corresponds to 1066-1072 (KLSAIPV). A helical membrane pass occupies residues 1073–1093 (VILIASVGIGVEFTVHIALGF). Residues 1094–1110 (LTAIGDRNTRSAVAMEH) are Cytoplasmic-facing. A helical membrane pass occupies residues 1111 to 1131 (MFAPVIDGAISTLLGVLMLAG). At 1132 to 1143 (SEFDFIMRYFFA) the chain is on the extracellular side. Residues 1144–1164 (VLAILTLLGILNGLVLLPVLL) traverse the membrane as a helical segment. The Cytoplasmic segment spans residues 1165-1220 (SLMGPPAEVVPANNANHLQSPSPEPMPPPMNHHGYYAGHIPKASHQAFSETSDSEY).

Belongs to the patched family. In terms of processing, glycosylation is necessary for SHH binding. Detected in embryonic presomitic mesoderm, neuroectoderm, tissue surrounding the notochord, ventral neural tube.

Its subcellular location is the membrane. Acts as a receptor for sonic hedgehog (SHH), indian hedgehog (IHH) and desert hedgehog (DHH). Associates with the smoothened protein (SMO) to transduce the hedgehog's proteins signal. The polypeptide is Protein patched homolog 1 (ptch1) (Danio rerio (Zebrafish)).